A 119-amino-acid chain; its full sequence is uncharacterized protein (119 aa).

2 consecutive transmembrane segments (helical) span residues 61 to 80 (LISA…LLSV) and 87 to 103 (VVGV…VDII).

Its subcellular location is the membrane. This is an uncharacterized protein from Saccharomyces cerevisiae (strain ATCC 204508 / S288c) (Baker's yeast).